Here is a 170-residue protein sequence, read N- to C-terminus: MDDVNSIVLAAGQAAEEGGTNNFLVPNGTFFFVLAIFLVVLAVIGTFVVPPILKVLRERDAMVAKTLADNKKSAEQFAAAQADYEKAMAEARVQASSYRDNARAEGRKVVEDARAHAEQEVASTLQQANEQLKRERDAVELDLRANVGAMSATLANRIVGVDVTTPAAAG.

Residues 30-50 (FFFVLAIFLVVLAVIGTFVVP) form a helical membrane-spanning segment.

Belongs to the ATPase B chain family. As to quaternary structure, F-type ATPases have 2 components, F(1) - the catalytic core - and F(0) - the membrane proton channel. F(1) has five subunits: alpha(3), beta(3), gamma(1), delta(1), epsilon(1). F(0) has three main subunits: a(1), b(2) and c(10-14). The alpha and beta chains form an alternating ring which encloses part of the gamma chain. F(1) is attached to F(0) by a central stalk formed by the gamma and epsilon chains, while a peripheral stalk is formed by the delta and b chains.

It is found in the cell membrane. Its function is as follows. F(1)F(0) ATP synthase produces ATP from ADP in the presence of a proton or sodium gradient. F-type ATPases consist of two structural domains, F(1) containing the extramembraneous catalytic core and F(0) containing the membrane proton channel, linked together by a central stalk and a peripheral stalk. During catalysis, ATP synthesis in the catalytic domain of F(1) is coupled via a rotary mechanism of the central stalk subunits to proton translocation. Component of the F(0) channel, it forms part of the peripheral stalk, linking F(1) to F(0). The polypeptide is ATP synthase subunit b (Mycobacterium marinum (strain ATCC BAA-535 / M)).